The primary structure comprises 328 residues: 17-beta-hydroxysteroid dehydrogenase type 1 (328 aa).

NADP(+) contacts are provided by residues 10–38 (GCSS…ATLR) and Asp-66. A Phosphoserine; by PKA modification is found at Ser-135. A substrate-binding site is contributed by Ser-143. Tyr-156 functions as the Proton acceptor in the catalytic mechanism. Lys-160 is an NADP(+) binding site. The tract at residues 291-328 (KAEAGAEAGGGAGPGAEDEAGRGAVGDPELGDPPAAPQ) is disordered.

It belongs to the short-chain dehydrogenases/reductases (SDR) family. Homodimer. Exists predominantly as a homodimer but also exits as monomer.

It localises to the cytoplasm. The catalysed reaction is 17beta-estradiol + NAD(+) = estrone + NADH + H(+). It catalyses the reaction 17beta-estradiol + NADP(+) = estrone + NADPH + H(+). The enzyme catalyses testosterone + NADP(+) = androst-4-ene-3,17-dione + NADPH + H(+). The protein operates within steroid biosynthesis; estrogen biosynthesis. Favors the reduction of estrogens and androgens. Converts estrone (E1) to a more potent estrogen, 17beta-estradiol (E2). Also has 20-alpha-HSD activity. Uses preferentially NADH. The polypeptide is 17-beta-hydroxysteroid dehydrogenase type 1 (Homo sapiens (Human)).